Consider the following 207-residue polypeptide: Dephospho-CoA kinase (207 aa).

A DPCK domain is found at 11–207 (RIGLTGGIAS…LLKMSPTAEL (197 aa)). 19 to 24 (ASGKSS) is an ATP binding site.

It belongs to the CoaE family.

It is found in the cytoplasm. It carries out the reaction 3'-dephospho-CoA + ATP = ADP + CoA + H(+). The protein operates within cofactor biosynthesis; coenzyme A biosynthesis; CoA from (R)-pantothenate: step 5/5. Catalyzes the phosphorylation of the 3'-hydroxyl group of dephosphocoenzyme A to form coenzyme A. The sequence is that of Dephospho-CoA kinase from Synechococcus sp. (strain CC9605).